Consider the following 273-residue polypeptide: Dermonecrotic toxin SdSicTox-betaIIB1aiii (273 aa).

The active site involves His-4. Mg(2+) is bound by residues Glu-24 and Asp-26. His-40 acts as the Nucleophile in catalysis. Intrachain disulfides connect Cys-44/Cys-50 and Cys-46/Cys-189. A Mg(2+)-binding site is contributed by Asp-84.

The protein belongs to the arthropod phospholipase D family. Class II subfamily. It depends on Mg(2+) as a cofactor. Expressed by the venom gland.

It is found in the secreted. The enzyme catalyses an N-(acyl)-sphingosylphosphocholine = an N-(acyl)-sphingosyl-1,3-cyclic phosphate + choline. The catalysed reaction is an N-(acyl)-sphingosylphosphoethanolamine = an N-(acyl)-sphingosyl-1,3-cyclic phosphate + ethanolamine. It catalyses the reaction a 1-acyl-sn-glycero-3-phosphocholine = a 1-acyl-sn-glycero-2,3-cyclic phosphate + choline. It carries out the reaction a 1-acyl-sn-glycero-3-phosphoethanolamine = a 1-acyl-sn-glycero-2,3-cyclic phosphate + ethanolamine. Dermonecrotic toxins cleave the phosphodiester linkage between the phosphate and headgroup of certain phospholipids (sphingolipid and lysolipid substrates), forming an alcohol (often choline) and a cyclic phosphate. This toxin acts on sphingomyelin (SM). It may also act on ceramide phosphoethanolamine (CPE), lysophosphatidylcholine (LPC) and lysophosphatidylethanolamine (LPE), but not on lysophosphatidylserine (LPS), and lysophosphatidylglycerol (LPG). It acts by transphosphatidylation, releasing exclusively cyclic phosphate products as second products. Induces dermonecrosis, hemolysis, increased vascular permeability, edema, inflammatory response, and platelet aggregation. The polypeptide is Dermonecrotic toxin SdSicTox-betaIIB1aiii (Sicarius cf. damarensis (strain GJB-2008) (Six-eyed sand spider)).